Here is a 390-residue protein sequence, read N- to C-terminus: Queuine tRNA-ribosyltransferase (390 aa).

Aspartate 92 (proton acceptor) is an active-site residue. Substrate is bound by residues 92 to 96 (DSGGF), aspartate 146, glutamine 195, and glycine 222. The tract at residues 253-259 (GVGTPED) is RNA binding. Catalysis depends on aspartate 272, which acts as the Nucleophile. The RNA binding; important for wobble base 34 recognition stretch occupies residues 277-281 (TRNAR). Positions 310, 312, 315, and 354 each coordinate Zn(2+).

This sequence belongs to the queuine tRNA-ribosyltransferase family. Homodimer. Within each dimer, one monomer is responsible for RNA recognition and catalysis, while the other monomer binds to the replacement base PreQ1. It depends on Zn(2+) as a cofactor.

The enzyme catalyses 7-aminomethyl-7-carbaguanine + guanosine(34) in tRNA = 7-aminomethyl-7-carbaguanosine(34) in tRNA + guanine. Its pathway is tRNA modification; tRNA-queuosine biosynthesis. Catalyzes the base-exchange of a guanine (G) residue with the queuine precursor 7-aminomethyl-7-deazaguanine (PreQ1) at position 34 (anticodon wobble position) in tRNAs with GU(N) anticodons (tRNA-Asp, -Asn, -His and -Tyr). Catalysis occurs through a double-displacement mechanism. The nucleophile active site attacks the C1' of nucleotide 34 to detach the guanine base from the RNA, forming a covalent enzyme-RNA intermediate. The proton acceptor active site deprotonates the incoming PreQ1, allowing a nucleophilic attack on the C1' of the ribose to form the product. After dissociation, two additional enzymatic reactions on the tRNA convert PreQ1 to queuine (Q), resulting in the hypermodified nucleoside queuosine (7-(((4,5-cis-dihydroxy-2-cyclopenten-1-yl)amino)methyl)-7-deazaguanosine). The polypeptide is Queuine tRNA-ribosyltransferase (Delftia acidovorans (strain DSM 14801 / SPH-1)).